We begin with the raw amino-acid sequence, 245 residues long: 1-(5-phosphoribosyl)-5-[(5-phosphoribosylamino)methylideneamino] imidazole-4-carboxamide isomerase (245 aa).

The active-site Proton acceptor is the Asp7. Residue Asp129 is the Proton donor of the active site.

The protein belongs to the HisA/HisF family.

The protein resides in the cytoplasm. It carries out the reaction 1-(5-phospho-beta-D-ribosyl)-5-[(5-phospho-beta-D-ribosylamino)methylideneamino]imidazole-4-carboxamide = 5-[(5-phospho-1-deoxy-D-ribulos-1-ylimino)methylamino]-1-(5-phospho-beta-D-ribosyl)imidazole-4-carboxamide. It functions in the pathway amino-acid biosynthesis; L-histidine biosynthesis; L-histidine from 5-phospho-alpha-D-ribose 1-diphosphate: step 4/9. This chain is 1-(5-phosphoribosyl)-5-[(5-phosphoribosylamino)methylideneamino] imidazole-4-carboxamide isomerase, found in Escherichia coli O9:H4 (strain HS).